We begin with the raw amino-acid sequence, 360 residues long: Mitogen-activated protein kinase 14 (360 aa).

Ser2 carries the post-translational modification N-acetylserine. Ser2 is subject to Phosphoserine. Thr16 carries the post-translational modification Phosphothreonine. The Protein kinase domain maps to 24 to 308; that stretch reads YQNLSPVGSG…AAQALAHAYF (285 aa). Residues 30–38 and Lys53 each bind ATP; that span reads VGSGAYGSV. At Lys53 the chain carries N6-acetyllysine. The active-site Proton acceptor is the Asp150. Lys152 carries the N6-acetyllysine modification. The residue at position 180 (Thr180) is a Phosphothreonine; by MAP2K3, MAP2K4, MAP2K6 and autocatalysis. The TXY motif lies at 180–182; that stretch reads TGY. At Tyr182 the chain carries Phosphotyrosine; by MAP2K3, MAP2K4, MAP2K6 and autocatalysis. Thr263 bears the Phosphothreonine mark. Tyr323 carries the post-translational modification Phosphotyrosine; by ZAP70.

Belongs to the protein kinase superfamily. CMGC Ser/Thr protein kinase family. MAP kinase subfamily. As to quaternary structure, component of a signaling complex containing at least AKAP13, PKN1, MAPK14, ZAK and MAP2K3. Within this complex, AKAP13 interacts directly with PKN1, which in turn recruits MAPK14, MAP2K3 and ZAK. Binds to a kinase interaction motif within the protein tyrosine phosphatase, PTPRR. This interaction retains MAPK14 in the cytoplasm and prevents nuclear accumulation. Interacts with SPAG9 and GADD45A. Interacts with CDC25B, CDC25C, DUSP1, DUSP10, DUSP16, NP60, SUPT20H and TAB1. Interacts with casein kinase II subunits CSNK2A1 and CSNK2B. Interacts with PPM1D. Interacts with CDK5RAP3; recruits PPM1D to MAPK14 and may regulate its dephosphorylation. Interacts with DUSP2; this interaction does not lead to catalytic activation of DUSP2 and dephosphrylation of MAPK14. Mg(2+) serves as cofactor. Dually phosphorylated on Thr-180 and Tyr-182 by the MAP2Ks MAP2K3/MKK3, MAP2K4/MKK4 and MAP2K6/MKK6 in response to inflammatory citokines, environmental stress or growth factors, which activates the enzyme. Dual phosphorylation can also be mediated by TAB1-mediated autophosphorylation. TCR engagement in T-cells also leads to Tyr-323 phosphorylation by ZAP70. Dephosphorylated and inactivated by DUPS1, DUSP10 and DUSP16. PPM1D also mediates dephosphorylation and inactivation of MAPK14. Post-translationally, acetylated at Lys-53 and Lys-152 by KAT2B and EP300. Acetylation at Lys-53 increases the affinity for ATP and enhances kinase activity. Lys-53 and Lys-152 are deacetylated by HDAC3. In terms of processing, ubiquitinated. Ubiquitination leads to degradation by the proteasome pathway.

The protein resides in the cytoplasm. Its subcellular location is the nucleus. The enzyme catalyses L-seryl-[protein] + ATP = O-phospho-L-seryl-[protein] + ADP + H(+). The catalysed reaction is L-threonyl-[protein] + ATP = O-phospho-L-threonyl-[protein] + ADP + H(+). Its activity is regulated as follows. Activated by cell stresses such as DNA damage, heat shock, osmotic shock, anisomycin and sodium arsenite, as well as pro-inflammatory stimuli such as bacterial lipopolysaccharide (LPS) and interleukin-1. Activation occurs through dual phosphorylation of Thr-180 and Tyr-182 by either of two dual specificity kinases, MAP2K3/MKK3 or MAP2K6/MKK6, and potentially also MAP2K4/MKK4, as well as by TAB1-mediated autophosphorylation. MAPK14 phosphorylated on both Thr-180 and Tyr-182 is 10-20-fold more active than MAPK14 phosphorylated only on Thr-180, whereas MAPK14 phosphorylated on Tyr-182 alone is inactive. whereas Thr-180 is necessary for catalysis, Tyr-182 may be required for auto-activation and substrate recognition. Phosphorylated at Tyr-323 by ZAP70 in an alternative activation pathway in response to TCR signaling in T-cells. This alternative pathway is inhibited by GADD45A. Inhibited by dual specificity phosphatases, such as DUSP1, DUSP10, and DUSP16. Specifically inhibited by the binding of pyridinyl-imidazole compounds, which are cytokine-suppressive anti-inflammatory drugs (CSAID). SB203580 is an inhibitor of MAPK14. Its function is as follows. Serine/threonine kinase which acts as an essential component of the MAP kinase signal transduction pathway. MAPK14 is one of the four p38 MAPKs which play an important role in the cascades of cellular responses evoked by extracellular stimuli such as pro-inflammatory cytokines or physical stress leading to direct activation of transcription factors. Accordingly, p38 MAPKs phosphorylate a broad range of proteins and it has been estimated that they may have approximately 200 to 300 substrates each. Some of the targets are downstream kinases which are activated through phosphorylation and further phosphorylate additional targets. RPS6KA5/MSK1 and RPS6KA4/MSK2 can directly phosphorylate and activate transcription factors such as CREB1, ATF1, the NF-kappa-B isoform RELA/NFKB3, STAT1 and STAT3, but can also phosphorylate histone H3 and the nucleosomal protein HMGN1. RPS6KA5/MSK1 and RPS6KA4/MSK2 play important roles in the rapid induction of immediate-early genes in response to stress or mitogenic stimuli, either by inducing chromatin remodeling or by recruiting the transcription machinery. On the other hand, two other kinase targets, MAPKAPK2/MK2 and MAPKAPK3/MK3, participate in the control of gene expression mostly at the post-transcriptional level, by phosphorylating ZFP36 (tristetraprolin) and ELAVL1, and by regulating EEF2K, which is important for the elongation of mRNA during translation. MKNK1/MNK1 and MKNK2/MNK2, two other kinases activated by p38 MAPKs, regulate protein synthesis by phosphorylating the initiation factor EIF4E2. MAPK14 also interacts with casein kinase II, leading to its activation through autophosphorylation and further phosphorylation of TP53/p53. In the cytoplasm, the p38 MAPK pathway is an important regulator of protein turnover. For example, CFLAR is an inhibitor of TNF-induced apoptosis whose proteasome-mediated degradation is regulated by p38 MAPK phosphorylation. In a similar way, MAPK14 phosphorylates the ubiquitin ligase SIAH2, regulating its activity towards EGLN3. MAPK14 may also inhibit the lysosomal degradation pathway of autophagy by interfering with the intracellular trafficking of the transmembrane protein ATG9. Another function of MAPK14 is to regulate the endocytosis of membrane receptors by different mechanisms that impinge on the small GTPase RAB5A. In addition, clathrin-mediated EGFR internalization induced by inflammatory cytokines and UV irradiation depends on MAPK14-mediated phosphorylation of EGFR itself as well as of RAB5A effectors. Ectodomain shedding of transmembrane proteins is regulated by p38 MAPKs as well. In response to inflammatory stimuli, p38 MAPKs phosphorylate the membrane-associated metalloprotease ADAM17. Such phosphorylation is required for ADAM17-mediated ectodomain shedding of TGF-alpha family ligands, which results in the activation of EGFR signaling and cell proliferation. Another p38 MAPK substrate is FGFR1. FGFR1 can be translocated from the extracellular space into the cytosol and nucleus of target cells, and regulates processes such as rRNA synthesis and cell growth. FGFR1 translocation requires p38 MAPK activation. In the nucleus, many transcription factors are phosphorylated and activated by p38 MAPKs in response to different stimuli. Classical examples include ATF1, ATF2, ATF6, ELK1, PTPRH, DDIT3, TP53/p53 and MEF2C and MEF2A. The p38 MAPKs are emerging as important modulators of gene expression by regulating chromatin modifiers and remodelers. The promoters of several genes involved in the inflammatory response, such as IL6, IL8 and IL12B, display a p38 MAPK-dependent enrichment of histone H3 phosphorylation on 'Ser-10' (H3S10ph) in LPS-stimulated myeloid cells. This phosphorylation enhances the accessibility of the cryptic NF-kappa-B-binding sites marking promoters for increased NF-kappa-B recruitment. Phosphorylates CDC25B and CDC25C which is required for binding to 14-3-3 proteins and leads to initiation of a G2 delay after ultraviolet radiation. Phosphorylates TIAR following DNA damage, releasing TIAR from GADD45A mRNA and preventing mRNA degradation. The p38 MAPKs may also have kinase-independent roles, which are thought to be due to the binding to targets in the absence of phosphorylation. Protein O-Glc-N-acylation catalyzed by the OGT is regulated by MAPK14, and, although OGT does not seem to be phosphorylated by MAPK14, their interaction increases upon MAPK14 activation induced by glucose deprivation. This interaction may regulate OGT activity by recruiting it to specific targets such as neurofilament H, stimulating its O-Glc-N-acylation. Required in mid-fetal development for the growth of embryo-derived blood vessels in the labyrinth layer of the placenta. Also plays an essential role in developmental and stress-induced erythropoiesis, through regulation of EPO gene expression. Phosphorylates S100A9 at 'Thr-113'. The chain is Mitogen-activated protein kinase 14 from Canis lupus familiaris (Dog).